A 373-amino-acid polypeptide reads, in one-letter code: Probable pectin lyase D (373 aa).

The signal sequence occupies residues M1–G24. Disulfide bonds link C82–C101 and C91–C225. N128 carries N-linked (GlcNAc...) asparagine glycosylation. R255 is a catalytic residue. N-linked (GlcNAc...) asparagine glycosylation is present at N274. C321 and C329 are disulfide-bonded. The N-linked (GlcNAc...) asparagine glycan is linked to N348. Over residues L354–S366 the composition is skewed to low complexity. Residues L354–L373 are disordered.

This sequence belongs to the polysaccharide lyase 1 family.

The protein resides in the secreted. The catalysed reaction is Eliminative cleavage of (1-&gt;4)-alpha-D-galacturonan methyl ester to give oligosaccharides with 4-deoxy-6-O-methyl-alpha-D-galact-4-enuronosyl groups at their non-reducing ends.. In terms of biological role, pectinolytic enzymes consist of four classes of enzymes: pectin lyase, polygalacturonase, pectin methylesterase and rhamnogalacturonase. Among pectinolytic enzymes, pectin lyase is the most important in depolymerization of pectin, since it cleaves internal glycosidic bonds of highly methylated pectins. This is Probable pectin lyase D (pelD) from Aspergillus niger (strain ATCC MYA-4892 / CBS 513.88 / FGSC A1513).